We begin with the raw amino-acid sequence, 253 residues long: MKRFNVSYVEVIKNGETISSCFQPFQKNENYGTITSANEQITPVIFHNLIMDMVLPKVVPIKGNKVTKMSMNLIDGFDCFYSTDDHDPKTVYVCFTLVDMPKILPIRILSGLQEYESNATNELLSSHVGQILDSFHEELVEYRNQTLNSSGNGQSSNGNGQNTISDIGDATEDQIKDVIQIMNDNIDKFLERQERVSLLVDKTSQLNSSSNKFRRKAVNIKEIMWWQKVKNITLLTFTIILFVSAAFMFFYLW.

The Cytoplasmic portion of the chain corresponds to Met1–Asn231. Residues Leu147–Asp166 are disordered. The span at Asn148–Asn162 shows a compositional bias: low complexity. Positions Ile167–Gln227 constitute a v-SNARE coiled-coil homology domain. A helical; Anchor for type IV membrane protein membrane pass occupies residues Ile232–Leu252. Position 253 (Trp253) is a topological domain, vacuolar.

It belongs to the synaptobrevin family. In terms of assembly, present in a pentameric cis-SNARE complex composed of the v-SNAREs NYV1, VTI1 and YKT6, and the t-SNAREs VAM3 and VAM7 on vacuolar membranes. Interacts in trans with the cognate t-SNARE VAM3 during the docking step of homotypic vacuolar fusion. Interacts with the vacuolar transporter chaperone (VTC) complex and the vacuolar Ca(2+)-ATPase PMC1.

It localises to the vacuole membrane. Vacuolar v-SNARE required for docking. Only involved in homotypic vacuole fusion. Required for Ca(2+) efflux from the vacuolar lumen, a required signal for subsequent membrane fusion events, by inhibiting vacuolar Ca(2+)-ATPase PMC1 and promoting Ca(2+) release when forming trans-SNARE assemblies during the docking step. In Saccharomyces cerevisiae (strain ATCC 204508 / S288c) (Baker's yeast), this protein is Vacuolar v-SNARE NYV1 (NYV1).